The sequence spans 333 residues: 6-phosphogluconolactonase (333 aa).

This sequence belongs to the cycloisomerase 2 family.

The catalysed reaction is 6-phospho-D-glucono-1,5-lactone + H2O = 6-phospho-D-gluconate + H(+). It participates in carbohydrate degradation; pentose phosphate pathway; D-ribulose 5-phosphate from D-glucose 6-phosphate (oxidative stage): step 2/3. In terms of biological role, catalyzes the hydrolysis of 6-phosphogluconolactone to 6-phosphogluconate. This Buchnera aphidicola subsp. Schizaphis graminum (strain Sg) protein is 6-phosphogluconolactonase.